Here is a 644-residue protein sequence, read N- to C-terminus: Keratin, type II cytoskeletal 1 (644 aa).

The head stretch occupies residues S2 to R179. Residue R12 is modified to Omega-N-methylarginine. Phosphoserine is present on residues S18 and S21. Residues A22 to R38 show a composition bias toward low complexity. The segment at A22–S47 is disordered. Omega-N-methylarginine is present on R45. Phosphoserine is present on S66. R82 carries the omega-N-methylarginine modification. Positions E180–L215 are coil 1A. One can recognise an IF rod domain in the interval E180 to M493. Residues Q216–F234 form a linker 1 region. The interval I235–M326 is coil 1B. K276 bears the N6,N6-dimethyllysine mark. The linker 12 stretch occupies residues Q327–I350. S344 carries the phosphoserine modification. The segment at I351 to E489 is coil 2. Disordered regions lie at residues E489 to G523 and S568 to R644. Positions E490 to R644 are tail. Over residues V501–T511 the composition is skewed to low complexity. 2 stretches are compositionally biased toward gly residues: residues S513–G523 and S568–S620. 2 positions are modified to omega-N-methylarginine: R518 and R588. Residues G621–S631 show a composition bias toward low complexity. Over residues V632–R644 the composition is skewed to polar residues.

Belongs to the intermediate filament family. In terms of assembly, heterotetramer of two type I and two type II keratins. Heterodimer with KRT10. Two heterodimers of KRT1 and KRT10 form a heterotetramer. Forms a heterodimer with KRT14; the interaction is more abundant in the absence of KRT5. Interacts with PLEC isoform 1C, when in a heterodimer with KRT10. Interacts with ITGB1 in the presence of RACK1 and SRC, and with RACK1. Interacts with C1QBP; the association represents a cell surface kininogen receptor. Interacts with EPPK1; interaction is dependent of higher-order structure of intermediate filament. In terms of processing, undergoes deimination of some arginine residues (citrullination). The source of this protein is neonatal foreskin. The 67-kDa type II keratins are expressed in terminally differentiating epidermis.

Its subcellular location is the cell membrane. The protein resides in the cytoplasm. Its function is as follows. May regulate the activity of kinases such as PKC and SRC via binding to integrin beta-1 (ITB1) and the receptor of activated protein C kinase 1 (RACK1). In complex with C1QBP is a high affinity receptor for kininogen-1/HMWK. In Homo sapiens (Human), this protein is Keratin, type II cytoskeletal 1 (KRT1).